Reading from the N-terminus, the 198-residue chain is Glycerol-3-phosphate acyltransferase 2 (198 aa).

4 consecutive transmembrane segments (helical) span residues 4-24 (TYLL…LVVG), 71-91 (LPII…AVLG), 113-133 (LLCY…SLLF), and 147-167 (VVAV…AMCL).

This sequence belongs to the PlsY family. As to quaternary structure, probably interacts with PlsX.

The protein resides in the cell membrane. It catalyses the reaction an acyl phosphate + sn-glycerol 3-phosphate = a 1-acyl-sn-glycero-3-phosphate + phosphate. The protein operates within lipid metabolism; phospholipid metabolism. Catalyzes the transfer of an acyl group from acyl-phosphate (acyl-PO(4)) to glycerol-3-phosphate (G3P) to form lysophosphatidic acid (LPA). This enzyme utilizes acyl-phosphate as fatty acyl donor, but not acyl-CoA or acyl-ACP. The chain is Glycerol-3-phosphate acyltransferase 2 from Bacillus cereus (strain ATCC 10987 / NRS 248).